A 550-amino-acid chain; its full sequence is Methyl-coenzyme M reductase subunit alpha (550 aa).

Position 147 (Q147) interacts with coenzyme F430. Coenzyme B contacts are provided by residues R225, 256-257 (KH), and R270. H257 bears the Pros-methylhistidine mark. At R271 the chain carries 5-methylarginine. Position 333 (Y333) interacts with coenzyme M. Q400 bears the 2-methylglutamine mark. A coenzyme M-binding site is contributed by Y444. G445 carries the 1-thioglycine modification. Residue D450 is modified to (Z)-2,3-didehydroaspartate. C452 bears the S-methylcysteine mark.

It belongs to the methyl-coenzyme M reductase alpha subunit family. As to quaternary structure, MCR is a hexamer of two alpha, two beta, and two gamma chains, forming a dimer of heterotrimers. It depends on coenzyme F430 as a cofactor. In terms of processing, the alpha subunit contains six modified amino acids near the active site region. Is methylated on His-257, Arg-271, Gln-400 and Cys-452, probably by the action of specific S-adenosylmethionine-dependent methyltransferases. Also contains a thioglycine at position 445, forming a thiopeptide bond. Contains a didehydroaspartate residue at position 450. The methylation on C5 of Arg-271 is a post-translational methylation not essential in vivo, but which plays a role for the stability and structural integrity of MCR.

The protein resides in the cytoplasm. The enzyme catalyses coenzyme B + methyl-coenzyme M = methane + coenzyme M-coenzyme B heterodisulfide. The protein operates within one-carbon metabolism; methyl-coenzyme M reduction; methane from methyl-coenzyme M: step 1/1. Its function is as follows. Component of the methyl-coenzyme M reductase (MCR) I that catalyzes the reductive cleavage of methyl-coenzyme M (CoM-S-CH3 or 2-(methylthio)ethanesulfonate) using coenzyme B (CoB or 7-mercaptoheptanoylthreonine phosphate) as reductant which results in the production of methane and the mixed heterodisulfide of CoB and CoM (CoM-S-S-CoB). This is the final step in methanogenesis. In Methanothermobacter thermautotrophicus (strain ATCC 29096 / DSM 1053 / JCM 10044 / NBRC 100330 / Delta H) (Methanobacterium thermoautotrophicum), this protein is Methyl-coenzyme M reductase subunit alpha (mcrA).